The primary structure comprises 692 residues: Transforming growth factor beta activator LRRC33 (692 aa).

The signal sequence occupies residues 1 to 24 (MEFLPLWLCLGFHFLIVEWRSGRG). Over 25 to 650 (TATAASQGGC…CKWGQVDTGL (626 aa)) the chain is Extracellular. The LRRNT domain occupies 29–56 (ASQGGCKVVDRVADCRSLNLASVPSGLP). LRR repeat units follow at residues 58-79 (HSRM…SLQA), 82-103 (RLED…AFHE), 106-127 (HLQN…SATA), 133-155 (RLRR…MLQN), 158-179 (SLEV…VFEG), 182-203 (RLVE…AFDG), 206-227 (ELRR…SLTQ), 228-239 (LRFLNVSYNILE), 251-272 (ELEI…PQCG), and 273-294 (KLHT…YNTS). N-linked (GlcNAc...) asparagine glycosylation is present at Asn74. The N-linked (GlcNAc...) asparagine glycan is linked to Asn155. Asn232 carries N-linked (GlcNAc...) asparagine glycosylation. N-linked (GlcNAc...) asparagine glycans are attached at residues Asn292, Asn309, and Asn312. LRR repeat units follow at residues 329 to 350 (ALRF…FLKK), 353 to 374 (SLSH…EHEP), 377 to 398 (ALTE…PGLT), 403 to 424 (NLRV…LFHS), 427 to 448 (SITT…VPLD), 463 to 484 (SLRS…PFQG), 486 to 507 (SLTH…SPLS), 512 to 533 (TLQV…MDFS), 537 to 558 (NLRE…KGSS), 559 to 580 (ALQT…VVSE), and 585 to 605 (GLQT…EGWG). An N-linked (GlcNAc...) asparagine glycan is attached at Asn408. A glycan (N-linked (GlcNAc...) asparagine) is linked at Asn500. One can recognise an LRRCT domain in the interval 606–643 (ALQHFKTIADLSMVTCNLSSKIIRVVELPEGIPQDCKW). Asn622 carries an N-linked (GlcNAc...) asparagine glycan. A helical membrane pass occupies residues 651–671 (FYLVLILPSCLTLLVASTVIF). Residues 672–692 (LTFKKPLLQVIKSRCHWSSIY) lie on the Cytoplasmic side of the membrane.

The protein belongs to the LRRC32/LRRC33 family. In terms of assembly, interacts (via LRR repeats) with TLR2, TLR3, TLR4, TLR9 and probably other Toll-like receptors. Interacts with CYBB/NOX2; the interaction is direct. Interacts with TGFB1; associates via disulfide bonds with the Latency-associated peptide chain (LAP) regulatory chain of TGFB1, leading to regulate activation of TGF-beta-1.

The protein resides in the cell membrane. It is found in the endoplasmic reticulum membrane. Its function is as follows. Key regulator of transforming growth factor beta-1 (TGFB1) specifically required for microglia function in the nervous system. Required for activation of latent TGF-beta-1 in macrophages and microglia: associates specifically via disulfide bonds with the Latency-associated peptide (LAP), which is the regulatory chain of TGFB1, and regulates integrin-dependent activation of TGF-beta-1. TGF-beta-1 activation mediated by LRRC33/NRROS is highly localized: there is little spreading of TGF-beta-1 activated from one microglial cell to neighboring microglia, suggesting the existence of localized and selective activation of TGF-beta-1 by LRRC33/NRROS. Indirectly plays a role in Toll-like receptor (TLR) signaling: ability to inhibit TLR-mediated NF-kappa-B activation and cytokine production is probably a consequence of its role in TGF-beta-1 signaling. This is Transforming growth factor beta activator LRRC33 from Rattus norvegicus (Rat).